A 221-amino-acid polypeptide reads, in one-letter code: Protein GrpE (221 aa).

Residues 1–83 form a disordered region; it reads MEQEQKATQE…AKNCRTRSED (83 aa). Residues 23 to 32 are compositionally biased toward basic and acidic residues; the sequence is QEEKAEERGG. The segment covering 41–53 has biased composition (low complexity); that stretch reads ENLQQENTQAQQE.

This sequence belongs to the GrpE family. In terms of assembly, homodimer.

The protein resides in the cytoplasm. In terms of biological role, participates actively in the response to hyperosmotic and heat shock by preventing the aggregation of stress-denatured proteins, in association with DnaK and GrpE. It is the nucleotide exchange factor for DnaK and may function as a thermosensor. Unfolded proteins bind initially to DnaJ; upon interaction with the DnaJ-bound protein, DnaK hydrolyzes its bound ATP, resulting in the formation of a stable complex. GrpE releases ADP from DnaK; ATP binding to DnaK triggers the release of the substrate protein, thus completing the reaction cycle. Several rounds of ATP-dependent interactions between DnaJ, DnaK and GrpE are required for fully efficient folding. The sequence is that of Protein GrpE from Geobacillus stearothermophilus (Bacillus stearothermophilus).